The chain runs to 511 residues: Glutamyl-tRNA(Gln) amidotransferase subunit A, mitochondrial (511 aa).

Residues lysine 72 and serine 149 each act as charge relay system in the active site. Serine 173 serves as the catalytic Acyl-ester intermediate.

It belongs to the amidase family. GatA subfamily. As to quaternary structure, subunit of the heterotrimeric GatCAB amidotransferase (AdT) complex, composed of A, B and C subunits.

Its subcellular location is the mitochondrion. The enzyme catalyses L-glutamyl-tRNA(Gln) + L-glutamine + ATP + H2O = L-glutaminyl-tRNA(Gln) + L-glutamate + ADP + phosphate + H(+). In terms of biological role, allows the formation of correctly charged Gln-tRNA(Gln) through the transamidation of misacylated Glu-tRNA(Gln) in the mitochondria. The reaction takes place in the presence of glutamine and ATP through an activated gamma-phospho-Glu-tRNA(Gln). This Fusarium vanettenii (strain ATCC MYA-4622 / CBS 123669 / FGSC 9596 / NRRL 45880 / 77-13-4) (Fusarium solani subsp. pisi) protein is Glutamyl-tRNA(Gln) amidotransferase subunit A, mitochondrial.